The primary structure comprises 109 residues: Parvalbumin alpha (109 aa).

Ser-1 carries the N-acetylserine modification. EF-hand domains follow at residues 38–73 and 77–109; these read KSDA…FSDG and LNDK…AKMT. Ca(2+) contacts are provided by Asp-51, Asp-53, Ser-55, Tyr-57, Glu-59, Glu-62, Asp-90, Asp-92, Asp-94, Lys-96, and Glu-101.

The protein belongs to the parvalbumin family. Monomer.

Its function is as follows. In muscle, parvalbumin is thought to be involved in relaxation after contraction. It binds two calcium ions. In Raja clavata (Thornback ray), this protein is Parvalbumin alpha.